Consider the following 231-residue polypeptide: Large ribosomal subunit protein uL1 (231 aa).

The protein belongs to the universal ribosomal protein uL1 family. In terms of assembly, part of the 50S ribosomal subunit.

Its function is as follows. Binds directly to 23S rRNA. The L1 stalk is quite mobile in the ribosome, and is involved in E site tRNA release. Protein L1 is also a translational repressor protein, it controls the translation of the L11 operon by binding to its mRNA. The protein is Large ribosomal subunit protein uL1 of Pseudomonas putida (strain ATCC 700007 / DSM 6899 / JCM 31910 / BCRC 17059 / LMG 24140 / F1).